A 33-amino-acid polypeptide reads, in one-letter code: Brevinin-2Eb (33 aa).

Cys-27 and Cys-33 are disulfide-bonded.

It belongs to the frog skin active peptide (FSAP) family. Brevinin subfamily. As to expression, expressed by the skin glands.

Its subcellular location is the secreted. Shows antibacterial activity against representative Gram-negative and Gram-positive bacterial species, and hemolytic activity. The protein is Brevinin-2Eb of Pelophylax lessonae (Pool frog).